A 255-amino-acid polypeptide reads, in one-letter code: uncharacterized protein (255 aa).

The NADP(+) site is built by I13, R37, D55, N81, Y148, K152, V180, and T182. Catalysis depends on Y148, which acts as the Proton donor. K152 (lowers pKa of active site Tyr) is an active-site residue.

This sequence belongs to the short-chain dehydrogenases/reductases (SDR) family.

In terms of biological role, involved in osmoadaptation. This is an uncharacterized protein from Emericella nidulans (strain FGSC A4 / ATCC 38163 / CBS 112.46 / NRRL 194 / M139) (Aspergillus nidulans).